The sequence spans 163 residues: Ureidoglycolate lyase 2 (163 aa).

This sequence belongs to the ureidoglycolate lyase family. As to quaternary structure, homodimer. Requires Ni(2+) as cofactor.

The enzyme catalyses (S)-ureidoglycolate = urea + glyoxylate. It participates in nitrogen metabolism; (S)-allantoin degradation. Its function is as follows. Catalyzes the catabolism of the allantoin degradation intermediate (S)-ureidoglycolate, generating urea and glyoxylate. Involved in the utilization of allantoin as nitrogen source. This is Ureidoglycolate lyase 2 from Rhizobium meliloti (strain 1021) (Ensifer meliloti).